A 440-amino-acid chain; its full sequence is Thymidine phosphorylase (440 aa).

Belongs to the thymidine/pyrimidine-nucleoside phosphorylase family. In terms of assembly, homodimer.

The enzyme catalyses thymidine + phosphate = 2-deoxy-alpha-D-ribose 1-phosphate + thymine. It participates in pyrimidine metabolism; dTMP biosynthesis via salvage pathway; dTMP from thymine: step 1/2. The enzymes which catalyze the reversible phosphorolysis of pyrimidine nucleosides are involved in the degradation of these compounds and in their utilization as carbon and energy sources, or in the rescue of pyrimidine bases for nucleotide synthesis. This chain is Thymidine phosphorylase, found in Cronobacter sakazakii (strain ATCC BAA-894) (Enterobacter sakazakii).